Here is a 487-residue protein sequence, read N- to C-terminus: Diacylglycerol kinase 4 (487 aa).

The DAGKc domain occupies 86–242 (TPEVPLMVFV…LDSWNILITM (157 aa)).

It belongs to the eukaryotic diacylglycerol kinase family. In terms of assembly, monomer. As to expression, highly expressed in pollen grains. Expressed in roots, hypocotyls, leaf vasculature, developing anthers and stigmas, and receptacles of siliques.

It is found in the endoplasmic reticulum. The protein resides in the cytoplasm. Its subcellular location is the cytosol. The catalysed reaction is a 1,2-diacyl-sn-glycerol + ATP = a 1,2-diacyl-sn-glycero-3-phosphate + ADP + H(+). Phosphorylates the second messenger diacylglycerol (DAG) to generate phosphatidic acid (PA), another important signaling molecule. PA is required for plant development and responses to abiotic stress and pathogen attack. May be involved in the accumulation of PA during cold stress. Involved in the regulation of PA and phosphatidylcholine biosynthesis in growing pollen tubes. Required for nitric oxide-dependent pollen tube growth and re-orientation responses. Functions together with DGK2 in male gametophyte development and biosynthesis of phosphatidylglycerol and phosphatidylinositol in the endoplasmic reticulum (ER). Involved in PA production for pollen grain growth, as well as leaf and root growth. Possesses guanylyl cyclase activity in vitro. The chain is Diacylglycerol kinase 4 from Arabidopsis thaliana (Mouse-ear cress).